Here is a 181-residue protein sequence, read N- to C-terminus: Caltractin ICL1d (181 aa).

The disordered stretch occupies residues 1 to 29 (MARRGQQPPPQQAPPAQKNQTGKFNPAEF). 4 consecutive EF-hand domains span residues 37 to 72 (EEVL…LGFE), 73 to 108 (AKNQ…RISE), 110 to 145 (DSKA…LGET), and 146 to 181 (MDDS…KTFA). Positions 50, 52, 54, 56, 61, 86, 88, 90, 92, and 97 each coordinate Ca(2+).

Belongs to the centrin family. Monomer.

Its subcellular location is the cytoplasm. The protein localises to the cytoskeleton. Plays a fundamental role in microtubule organizing center structure and function. Component of the infraciliary lattice (ICL) and the ciliary basal bodies. This Paramecium tetraurelia protein is Caltractin ICL1d (Icl1d).